The sequence spans 425 residues: Pyruvate dehydrogenase E1 component subunit alpha-3, chloroplastic (425 aa).

Residues 1–66 (MAAASSFTAA…VLPGNKAAPA (66 aa)) constitute a chloroplast transit peptide. His-109, Tyr-135, Arg-136, Ala-184, Ile-186, Asp-224, Gly-225, and Asn-253 together coordinate pyruvate. Thiamine diphosphate is bound by residues Tyr-135, Arg-136, Ala-184, Ile-186, Asp-224, Gly-225, Asn-253, and His-322. Asp-224 is a binding site for Mg(2+). Asn-253 contributes to the Mg(2+) binding site.

Tetramer of 2 alpha and 2 beta subunits. Thiamine diphosphate serves as cofactor. It depends on Mg(2+) as a cofactor.

The protein resides in the plastid. It is found in the chloroplast. It catalyses the reaction N(6)-[(R)-lipoyl]-L-lysyl-[protein] + pyruvate + H(+) = N(6)-[(R)-S(8)-acetyldihydrolipoyl]-L-lysyl-[protein] + CO2. The pyruvate dehydrogenase complex catalyzes the overall conversion of pyruvate to acetyl-CoA and CO(2). It contains multiple copies of three enzymatic components: pyruvate dehydrogenase (E1), dihydrolipoamide acetyltransferase (E2) and lipoamide dehydrogenase (E3). This is Pyruvate dehydrogenase E1 component subunit alpha-3, chloroplastic from Oryza sativa subsp. japonica (Rice).